Consider the following 238-residue polypeptide: Fibroblast growth factor-binding protein 1 (238 aa).

A signal peptide spans 1–20 (MRIHGLILLSFLLLAAQVLS). The tract at residues 25–61 (KTAKNVPDSTTEEDMSPSLGKARNKQRSRTSKSMTHG) is disordered. Intrachain disulfides connect C71-C88, C97-C130, and C106-C142. O-linked (GalNAc...) serine glycosylation occurs at S164. Residues 197–238 (KDSECLEDPDVLTQRKTALEFCGESWSSFCTFFLNMLQATSC) are sufficient for interaction with FGF2 and FGF2-induced effects. Disulfide bonds link C201–C238 and C218–C226.

This sequence belongs to the fibroblast growth factor-binding protein family. As to quaternary structure, found in a complex with FGFBP1, FGF1 and FGF2. Interacts with FGF1, FGF2, FGF7, FGF10, FGF22 and HSPG2. Expressed in gut, eye, thymus, skin, lung, tongue, Purkinje cells and cerebral chorioid plexus (at protein level).

The protein localises to the secreted. Its subcellular location is the extracellular space. It is found in the cell membrane. In terms of biological role, acts as a carrier protein that release fibroblast-binding factors (FGFs) from the extracellular matrix (EM) storage and thus enhance the mitogenic activity of FGFs. Enhances FGF2 signaling during tissue repair, angiogenesis and in tumor growth. This chain is Fibroblast growth factor-binding protein 1 (Fgfbp1), found in Rattus norvegicus (Rat).